The primary structure comprises 126 residues: Sperm-specific H1/protamine-like protein type 2 (126 aa).

The H15 domain maps to Lys5–Lys84. Positions Ser74–Asn126 are disordered. Residues Lys90–Lys120 show a composition bias toward basic residues.

Post-translationally, OE2 and OE3 are produced by post-translational cleavage of a common precursor. Sperm.

It localises to the nucleus. The protein localises to the chromosome. Its function is as follows. Linker histones are implicated in chromatin remodeling and/or transcriptional regulation during spermiogenesis, the process of spermatid maturation into spermatozoa. Protamines substitute for histones in the chromatin of sperm during the haploid phase of spermatogenesis. They compact sperm DNA into a highly condensed, stable and inactive complex. This chain is Sperm-specific H1/protamine-like protein type 2, found in Ostrea edulis (Native oyster).